Reading from the N-terminus, the 474-residue chain is Trehalose-6-phosphate synthase (474 aa).

Arginine 10 contacts D-glucose 6-phosphate. 22 to 23 is a binding site for UDP-alpha-D-glucose; sequence GG. Residues tyrosine 77 and aspartate 131 each coordinate D-glucose 6-phosphate. Positions 263 and 268 each coordinate UDP-alpha-D-glucose. Residue arginine 301 coordinates D-glucose 6-phosphate. Residues phenylalanine 340 and 366–370 each bind UDP-alpha-D-glucose; that span reads LVAKE.

It belongs to the glycosyltransferase 20 family. In terms of assembly, homotetramer.

It carries out the reaction D-glucose 6-phosphate + UDP-alpha-D-glucose = alpha,alpha-trehalose 6-phosphate + UDP + H(+). It functions in the pathway glycan biosynthesis; trehalose biosynthesis. Probably involved in the osmoprotection via the biosynthesis of trehalose. Catalyzes the transfer of glucose from UDP-alpha-D-glucose (UDP-Glc) to D-glucose 6-phosphate (Glc-6-P) to form trehalose-6-phosphate. Acts with retention of the anomeric configuration of the UDP-sugar donor. The polypeptide is Trehalose-6-phosphate synthase (Escherichia coli O9:H4 (strain HS)).